The sequence spans 702 residues: Methionine--tRNA ligase (702 aa).

The 'HIGH' region motif lies at P23–H33. Residues C154, C157, C167, and C170 each contribute to the Zn(2+) site. Positions K341 to S345 match the 'KMSKS' region motif. K344 provides a ligand contact to ATP. The interval L562–P593 is disordered. The segment covering A569–N578 has biased composition (polar residues). The tRNA-binding domain maps to D599–R702.

This sequence belongs to the class-I aminoacyl-tRNA synthetase family. MetG type 1 subfamily. In terms of assembly, homodimer. Zn(2+) is required as a cofactor.

Its subcellular location is the cytoplasm. The catalysed reaction is tRNA(Met) + L-methionine + ATP = L-methionyl-tRNA(Met) + AMP + diphosphate. Is required not only for elongation of protein synthesis but also for the initiation of all mRNA translation through initiator tRNA(fMet) aminoacylation. This chain is Methionine--tRNA ligase, found in Xylella fastidiosa (strain 9a5c).